A 65-amino-acid chain; its full sequence is LLFPLATLQLNADQPVERNAENIQDLNPDKRFIFMPVPRRRGPYGSVHRRRGPYRRHGNCFCPSG.

A signal peptide spans 1–12 (LLFPLATLQLNA). Positions 13-48 (DQPVERNAENIQDLNPDKRFIFMPVPRRRGPYGSVH) are excised as a propeptide. S64 carries the post-translational modification Serine amide.

It belongs to the conotoxin M superfamily. In terms of assembly, homodimer; disulfide-linked. As to expression, expressed by the venom duct.

Its subcellular location is the secreted. In Conus planorbis (Planorbis cone), this protein is Conopeptide Vt3.2.